Consider the following 158-residue polypeptide: Small ribosomal subunit protein uS7 (158 aa).

It belongs to the universal ribosomal protein uS7 family. As to quaternary structure, part of the 30S ribosomal subunit. Contacts proteins S9 and S11.

In terms of biological role, one of the primary rRNA binding proteins, it binds directly to 16S rRNA where it nucleates assembly of the head domain of the 30S subunit. Is located at the subunit interface close to the decoding center, probably blocks exit of the E-site tRNA. This chain is Small ribosomal subunit protein uS7, found in Christiangramia forsetii (strain DSM 17595 / CGMCC 1.15422 / KT0803) (Gramella forsetii).